We begin with the raw amino-acid sequence, 429 residues long: 3-phosphoshikimate 1-carboxyvinyltransferase (429 aa).

3 residues coordinate 3-phosphoshikimate: K23, S24, and R28. Residue K23 coordinates phosphoenolpyruvate. The phosphoenolpyruvate site is built by G95 and R123. S168, Q170, D316, and K343 together coordinate 3-phosphoshikimate. Q170 contacts phosphoenolpyruvate. Catalysis depends on D316, which acts as the Proton acceptor. Positions 347 and 389 each coordinate phosphoenolpyruvate.

Belongs to the EPSP synthase family. In terms of assembly, monomer.

The protein localises to the cytoplasm. It catalyses the reaction 3-phosphoshikimate + phosphoenolpyruvate = 5-O-(1-carboxyvinyl)-3-phosphoshikimate + phosphate. It participates in metabolic intermediate biosynthesis; chorismate biosynthesis; chorismate from D-erythrose 4-phosphate and phosphoenolpyruvate: step 6/7. Catalyzes the transfer of the enolpyruvyl moiety of phosphoenolpyruvate (PEP) to the 5-hydroxyl of shikimate-3-phosphate (S3P) to produce enolpyruvyl shikimate-3-phosphate and inorganic phosphate. The sequence is that of 3-phosphoshikimate 1-carboxyvinyltransferase from Bacillus cereus (strain 03BB102).